Consider the following 479-residue polypeptide: Glutamate--tRNA ligase (479 aa).

The short motif at 21-31 is the 'HIGH' region element; the sequence is PSPTGYLHVGG. Residues 248–252 carry the 'KMSKS' region motif; sequence KLSKR. Residue Lys-251 coordinates ATP.

Belongs to the class-I aminoacyl-tRNA synthetase family. Glutamate--tRNA ligase type 1 subfamily. Monomer.

It localises to the cytoplasm. The catalysed reaction is tRNA(Glu) + L-glutamate + ATP = L-glutamyl-tRNA(Glu) + AMP + diphosphate. In terms of biological role, catalyzes the attachment of glutamate to tRNA(Glu) in a two-step reaction: glutamate is first activated by ATP to form Glu-AMP and then transferred to the acceptor end of tRNA(Glu). The chain is Glutamate--tRNA ligase from Haemophilus ducreyi (strain 35000HP / ATCC 700724).